A 504-amino-acid polypeptide reads, in one-letter code: Galactan beta-1,4-galactosyltransferase GALS3 (504 aa).

Residues 30–50 traverse the membrane as a helical segment; sequence LTFMALLVLCTLATLLPFIPS. Residues 242–456 form the GT92 domain; it reads DYLYCGSSLY…YHGSISQRRE (215 aa).

This sequence belongs to the glycosyltransferase 92 family. In terms of tissue distribution, expressed in root caps, mature leaves, top of the stems and seeds.

It localises to the golgi apparatus membrane. In terms of biological role, involved in the biosynthesis of beta-1,4-galactan. Beta-1,4-galactans are abundant polysaccharides in plant cell walls and are found as side-chain of rhamnogalacturonan I, which is a major component of pectin. This is Galactan beta-1,4-galactosyltransferase GALS3 from Arabidopsis thaliana (Mouse-ear cress).